The chain runs to 92 residues: Large ribosomal subunit protein eL43y (92 aa).

The segment at 39 to 60 (CEFCGKYGVKRKAVGIWGCKDC) adopts a C4-type zinc-finger fold.

It belongs to the eukaryotic ribosomal protein eL43 family.

This is Large ribosomal subunit protein eL43y (RPL37AC) from Arabidopsis thaliana (Mouse-ear cress).